A 41-amino-acid polypeptide reads, in one-letter code: Large ribosomal subunit protein bL36 (41 aa).

Belongs to the bacterial ribosomal protein bL36 family.

In Rickettsia massiliae (strain Mtu5), this protein is Large ribosomal subunit protein bL36.